The chain runs to 349 residues: Short chain dehydrogenase/reductase dpfgH (349 aa).

Residues 9–31 (LCIRVVDSLYGSFLYLPLAILFL) form a helical membrane-spanning segment. Ile65, Arg89, and Asp115 together coordinate NADP(+). The N-linked (GlcNAc...) asparagine glycan is linked to Asn118. The NADP(+) site is built by Asn142 and Lys164. Active-site proton donor residues include Ser191 and Ser192. The NADP(+) site is built by Tyr223 and Lys227. The active-site Proton acceptor is Tyr223. Lys227 serves as the catalytic Lowers pKa of active site Tyr. An N-linked (GlcNAc...) asparagine glycan is attached at Asn334.

It belongs to the short-chain dehydrogenases/reductases (SDR) family.

It localises to the membrane. The protein operates within secondary metabolite biosynthesis; terpenoid biosynthesis. Short chain dehydrogenase/reductase; part of the gene cluster that mediates the biosynthesis of diterpenoid pyrones. The first step of the pathway is the synthesis of the alpha-pyrone moiety by the polyketide synthase dpfgA via condensation of one acetyl-CoA starter unit with 3 malonyl-CoA units and 2 methylations. The alpha-pyrone is then combined with geranylgeranyl pyrophosphate (GGPP) formed by the GGPP synthase dpfgD through the action of the prenyltransferase dpfgC to yield a linear alpha-pyrone diterpenoid. Subsequent steps in the diterpenoid pyrone biosynthetic pathway involve the decalin core formation, which is initiated by the epoxidation of the C10-C11 olefin by the FAD-dependent oxidoreductase dpfgE, and is followed by a cyclization cascade catalyzed by the terpene cyclase dpfgB. The short chain dehydrogenase/reductase dpfgG then oxidizes the 8S hydroxy group to a ketone and the short chain dehydrogenase/reductase dpfgH reduces the ketone to the 8R hydroxy group to yield higginsianin B. Higginsianin B is further methylated by the methyltransferase dpfgI to produce the intermediate named FDDP B. The cytochrome P450 monooxygenase dfgpJ then catalyzes a three-step oxidation at C-27 to generate a carboxylic acid as well as C-26 hydroxylation. Finally, methyltransferase dpfgK methylates the carboxylic acid generated by dpfgJ, yielding the final diterpenoid pyrones from the pathway which were named FDDP D and FDDP E. In Gibberella zeae (strain ATCC MYA-4620 / CBS 123657 / FGSC 9075 / NRRL 31084 / PH-1) (Wheat head blight fungus), this protein is Short chain dehydrogenase/reductase dpfgH.